We begin with the raw amino-acid sequence, 180 residues long: Crossover junction endodeoxyribonuclease RuvC (180 aa).

Catalysis depends on residues D7, E66, and D138. Residues D7, E66, and D138 each coordinate Mg(2+).

The protein belongs to the RuvC family. Homodimer which binds Holliday junction (HJ) DNA. The HJ becomes 2-fold symmetrical on binding to RuvC with unstacked arms; it has a different conformation from HJ DNA in complex with RuvA. In the full resolvosome a probable DNA-RuvA(4)-RuvB(12)-RuvC(2) complex forms which resolves the HJ. It depends on Mg(2+) as a cofactor.

The protein localises to the cytoplasm. It catalyses the reaction Endonucleolytic cleavage at a junction such as a reciprocal single-stranded crossover between two homologous DNA duplexes (Holliday junction).. In terms of biological role, the RuvA-RuvB-RuvC complex processes Holliday junction (HJ) DNA during genetic recombination and DNA repair. Endonuclease that resolves HJ intermediates. Cleaves cruciform DNA by making single-stranded nicks across the HJ at symmetrical positions within the homologous arms, yielding a 5'-phosphate and a 3'-hydroxyl group; requires a central core of homology in the junction. The consensus cleavage sequence is 5'-(A/T)TT(C/G)-3'. Cleavage occurs on the 3'-side of the TT dinucleotide at the point of strand exchange. HJ branch migration catalyzed by RuvA-RuvB allows RuvC to scan DNA until it finds its consensus sequence, where it cleaves and resolves the cruciform DNA. The sequence is that of Crossover junction endodeoxyribonuclease RuvC from Burkholderia orbicola (strain MC0-3).